Reading from the N-terminus, the 125-residue chain is Ribonuclease P protein component (125 aa).

Belongs to the RnpA family. As to quaternary structure, consists of a catalytic RNA component (M1 or rnpB) and a protein subunit.

The catalysed reaction is Endonucleolytic cleavage of RNA, removing 5'-extranucleotides from tRNA precursor.. Its function is as follows. RNaseP catalyzes the removal of the 5'-leader sequence from pre-tRNA to produce the mature 5'-terminus. It can also cleave other RNA substrates such as 4.5S RNA. The protein component plays an auxiliary but essential role in vivo by binding to the 5'-leader sequence and broadening the substrate specificity of the ribozyme. This is Ribonuclease P protein component from Clostridium perfringens (strain ATCC 13124 / DSM 756 / JCM 1290 / NCIMB 6125 / NCTC 8237 / Type A).